Consider the following 744-residue polypeptide: Zinc finger protein 483 (744 aa).

The 83-residue stretch at 52-134 (RQRFRWFCYS…TLIEDLTQML (83 aa)) folds into the SCAN box domain. The tract at residues 137-156 (KDPVSQDSTVSQEENSKEDK) is disordered. Residues 170–241 (ITLKDVAVNF…EEVSKSSRLD (72 aa)) form the KRAB domain. Disordered regions lie at residues 263 to 308 (ESQQ…SPFG) and 350 to 385 (KEKTAGEKSRKSNDGGKVLSHSSALTEHQKRQKIHL). The segment covering 277–293 (NQGNSKGRVAQNKTLGS) has biased composition (polar residues). Basic and acidic residues-rich tracts occupy residues 298–308 (KKFDPDKSPFG) and 350–363 (KEKTAGEKSRKSND). 11 C2H2-type zinc fingers span residues 439 to 461 (HKCSKCGKAFGYSASLTKHRRIH), 467 to 489 (YMCNECGKAFSDSSSLTPHHRTH), 495 to 517 (FKCDDCGKGFTLSAHLIKHQRIH), 523 to 545 (YKCKDCGRPFSDSSSLIQHQRIH), 551 to 573 (YTCSNCGKSFSHSSSLSKHQRIH), 579 to 601 (YKCGECGKAFRQNSCLTRHQRIH), 607 to 629 (YLCNDCGMTFSHFTSVIYHQRLH), 635 to 657 (YKCNQCEKAFPTHSLLSRHQRIH), 663 to 685 (YKCKECGKSFSQSSSLNEHHRIH), 691 to 713 (YECNYCGATFSRSSILVEHLKIH), and 719 to 741 (YECNECEKTFKSNSGLIRHRGFH).

It belongs to the krueppel C2H2-type zinc-finger protein family.

The protein resides in the nucleus. Functionally, may be involved in transcriptional regulation. This Homo sapiens (Human) protein is Zinc finger protein 483 (ZNF483).